The chain runs to 515 residues: MDEFHRCGKEDSFWQQCFLYPLFFKEDLYAISHDHYLDVSSSSRPMEHLSSNDQLSFLTVKRLIGQIRKQNHSIVLFVNCDPNPLADRKKSSYSESVLEALTLVLEVPFSIWSKYSVEGMNESKSFRSIHSIFPFLEDKFPHSNSILDARIPYSIHPEILVRTFRRWIRDAPSLHPLRSVLYEYRNSTENLQRSIIVVPRVNTRFFLFLWNYYVCECESILFSRLKRSSHSRSLSHGSFPQRTHFHRKIKHIIIFSRRNSLKSIWSLKDPKIHYVRYGERPIIAIKGAHLLVKKCRYYLLIFRQFYFHLWSEPYRVCSHQLSKNCSSSPGYFLRVRMNPILVRTKMLDELFIADLITDEIDPIVPIVPIIGLLATEKFCDISGRPISKLSWTSLTDDDILDRFDQIWRNLFHYYSGSFDRDGLYRIKYILSLSCAKTLACKHKSTIRVVRKELGPELFKKSFSKEREFDSLRFSSKAAARSQRERIWHSDIPQINPLANSWQKIQDLKIENLFDQ.

This sequence belongs to the intron maturase 2 family. MatK subfamily.

It is found in the plastid. The protein localises to the chloroplast. Its function is as follows. Usually encoded in the trnK tRNA gene intron. Probably assists in splicing its own and other chloroplast group II introns. The polypeptide is Maturase K (Pinus banksiana (Jack pine)).